Consider the following 101-residue polypeptide: MAKKSMKNRELKRQLTVAKFAKKRAELKATIVNLNASPEERFAAVVALQKQPRDASAARLRNRCRLTGRPHGVYRKFGLGRNMLRQAAMRGDVPGLVKASW.

Belongs to the universal ribosomal protein uS14 family. As to quaternary structure, part of the 30S ribosomal subunit. Contacts proteins S3 and S10.

In terms of biological role, binds 16S rRNA, required for the assembly of 30S particles and may also be responsible for determining the conformation of the 16S rRNA at the A site. The sequence is that of Small ribosomal subunit protein uS14 from Pseudomonas putida (strain W619).